Consider the following 502-residue polypeptide: Glucose-6-phosphate isomerase (502 aa).

Residue E331 is the Proton donor of the active site. Residues H362 and K471 contribute to the active site.

It belongs to the GPI family.

The protein localises to the cytoplasm. It catalyses the reaction alpha-D-glucose 6-phosphate = beta-D-fructose 6-phosphate. Its pathway is carbohydrate biosynthesis; gluconeogenesis. It participates in carbohydrate degradation; glycolysis; D-glyceraldehyde 3-phosphate and glycerone phosphate from D-glucose: step 2/4. Its function is as follows. Catalyzes the reversible isomerization of glucose-6-phosphate to fructose-6-phosphate. The polypeptide is Glucose-6-phosphate isomerase (Xylella fastidiosa (strain 9a5c)).